A 368-amino-acid chain; its full sequence is Protein mab-21-like (368 aa).

It belongs to the mab-21 family.

This chain is Protein mab-21-like, found in Drosophila melanogaster (Fruit fly).